The sequence spans 242 residues: Immunity protein TsiV2 (242 aa).

3 helical membrane passes run 39-59 (VFGA…FADI), 66-86 (FWGF…LFMP), and 118-138 (FAWV…PLAF).

It localises to the host membrane. In terms of biological role, immunity protein that plays a role in preventing early activation of toxin VasX. The protein is Immunity protein TsiV2 of Vibrio cholerae serotype O1 (strain ATCC 39315 / El Tor Inaba N16961).